Reading from the N-terminus, the 288-residue chain is Transposase for insertion sequence element IS1106 (288 aa).

This sequence belongs to the transposase 11 family.

Functionally, involved in the transposition of the insertion sequence. This Neisseria meningitidis serogroup B protein is Transposase for insertion sequence element IS1106.